A 170-amino-acid chain; its full sequence is Adenine phosphoribosyltransferase (170 aa).

The protein belongs to the purine/pyrimidine phosphoribosyltransferase family. As to quaternary structure, homodimer.

It is found in the cytoplasm. It carries out the reaction AMP + diphosphate = 5-phospho-alpha-D-ribose 1-diphosphate + adenine. Its pathway is purine metabolism; AMP biosynthesis via salvage pathway; AMP from adenine: step 1/1. Its function is as follows. Catalyzes a salvage reaction resulting in the formation of AMP, that is energically less costly than de novo synthesis. The protein is Adenine phosphoribosyltransferase of Bacillus velezensis (strain DSM 23117 / BGSC 10A6 / LMG 26770 / FZB42) (Bacillus amyloliquefaciens subsp. plantarum).